The sequence spans 238 residues: Chromosome partition protein MukE (238 aa).

It belongs to the MukE family. In terms of assembly, interacts, and probably forms a ternary complex, with MukF and MukB. The complex formation is stimulated by calcium or magnesium.

The protein localises to the cytoplasm. It is found in the nucleoid. Its function is as follows. Involved in chromosome condensation, segregation and cell cycle progression. May participate in facilitating chromosome segregation by condensation DNA from both sides of a centrally located replisome during cell division. Probably acts via its interaction with MukB and MukF. This chain is Chromosome partition protein MukE, found in Haemophilus ducreyi (strain 35000HP / ATCC 700724).